The sequence spans 154 residues: Ribosome maturation factor RimP (154 aa).

The protein belongs to the RimP family.

The protein resides in the cytoplasm. Functionally, required for maturation of 30S ribosomal subunits. The polypeptide is Ribosome maturation factor RimP (Haemophilus ducreyi (strain 35000HP / ATCC 700724)).